Reading from the N-terminus, the 1788-residue chain is Protein Shroom3 (1788 aa).

Disordered regions lie at residues 1–25, 146–174, 225–263, 321–367, 382–401, 469–488, 498–548, 727–768, 793–821, 876–915, 1011–1067, 1086–1133, 1171–1263, 1303–1324, 1404–1467, and 1507–1538; these read MMQV…STSD, EVNS…HGRL, KAAG…ESSP, GAKS…KQEG, PDIS…PLRL, NIAS…QADH, TVHA…GNKL, EISP…VTPT, TAEQ…APLT, TGRR…SMNS, SRRH…SASN, SFKN…PETK, KRGK…SEAE, DTES…PPSL, VPAP…AKSQ, and ALKE…KRET. Composition is skewed to polar residues over residues 147 to 161 and 230 to 240; these read VNSS…SRQP and HSTNTSSNAAQ. Composition is skewed to basic and acidic residues over residues 245–259 and 357–366; these read VHGD…ERSP and SVKEREKKQE. Positions 476–488 are enriched in basic and acidic residues; the sequence is NKMDERSNRQADH. An ASD1 domain is found at 708–811; it reads VKDAQCKVLE…SEPEKMNEVG (104 aa). The segment covering 793–808 has biased composition (basic and acidic residues); sequence TAEQKKRSYSEPEKMN. A compositionally biased stretch (polar residues) spans 893–903; sequence QSTYFSGSIMD. Low complexity predominate over residues 904–915; sequence NQSMTSTSSMNS. 3 stretches are compositionally biased toward polar residues: residues 1055–1067, 1100–1124, and 1211–1263; these read EVGN…SASN, ENSS…SISG, and TSAQ…SEAE. The segment covering 1313–1323 has biased composition (pro residues); sequence PPSPPPFPPPS. Over residues 1433–1451 the composition is skewed to polar residues; sequence SILQSSEGNFNPSDSQSTL. The region spanning 1467-1756 is the ASD2 domain; that stretch reads QELAKEIVTK…QLRCLTESLP (290 aa). The segment covering 1529–1538 has biased composition (basic and acidic residues); sequence SEXKEEKRET. Residues 1653 to 1708 adopt a coiled-coil conformation; it reads RLARVENALSSLGEDASAEERKTWNEKKKQLCGQHEDARELKENLDRREKLVMDFL.

Belongs to the shroom family. Interacts with F-actin. Interacts with ROCK1. In terms of tissue distribution, expressed in epithelial cells of the cement gland.

It is found in the cell junction. It localises to the adherens junction. The protein resides in the cytoplasm. Its subcellular location is the cytoskeleton. The protein localises to the apical cell membrane. Functionally, controls cell shape changes in the neuroepithelium during neural tube closure. Induces apical constriction in epithelial cells by promoting the apical accumulation of F-actin and myosin II, and probably by bundling stress fibers. Induces apicobasal cell elongation by redistributing gamma-tubulin and directing the assembly of robust apicobasal microtubule arrays. In Xenopus laevis (African clawed frog), this protein is Protein Shroom3 (shroom3).